Consider the following 526-residue polypeptide: CTP synthase (526 aa).

The segment at 1-270 (MKYIFVTGGV…ADVLSTHLGL (270 aa)) is amidoligase domain. Ser-12 contacts CTP. Ser-12 provides a ligand contact to UTP. Residues 13–18 (GLGKGI) and Asp-70 each bind ATP. Residues Asp-70 and Glu-145 each contribute to the Mg(2+) site. Residues 152–154 (DIE), 191–196 (KTKPTQ), and Lys-227 contribute to the CTP site. UTP-binding positions include 191–196 (KTKPTQ) and Lys-227. The region spanning 293–525 (VAIVSKYGIE…VEACRANKRT (233 aa)) is the Glutamine amidotransferase type-1 domain. Gly-349 contributes to the L-glutamine binding site. Catalysis depends on Cys-376, which acts as the Nucleophile; for glutamine hydrolysis. Residues 377–380 (LGFQ), Glu-400, and Arg-455 each bind L-glutamine. Residues His-498 and Glu-500 contribute to the active site.

The protein belongs to the CTP synthase family. In terms of assembly, homotetramer.

It catalyses the reaction UTP + L-glutamine + ATP + H2O = CTP + L-glutamate + ADP + phosphate + 2 H(+). The catalysed reaction is L-glutamine + H2O = L-glutamate + NH4(+). It carries out the reaction UTP + NH4(+) + ATP = CTP + ADP + phosphate + 2 H(+). It participates in pyrimidine metabolism; CTP biosynthesis via de novo pathway; CTP from UDP: step 2/2. Its activity is regulated as follows. Allosterically activated by GTP, when glutamine is the substrate; GTP has no effect on the reaction when ammonia is the substrate. The allosteric effector GTP functions by stabilizing the protein conformation that binds the tetrahedral intermediate(s) formed during glutamine hydrolysis. Inhibited by the product CTP, via allosteric rather than competitive inhibition. Catalyzes the ATP-dependent amination of UTP to CTP with either L-glutamine or ammonia as the source of nitrogen. Regulates intracellular CTP levels through interactions with the four ribonucleotide triphosphates. The polypeptide is CTP synthase (Methanoregula boonei (strain DSM 21154 / JCM 14090 / 6A8)).